An 896-amino-acid polypeptide reads, in one-letter code: Bifunctional glutamine synthetase adenylyltransferase/adenylyl-removing enzyme (896 aa).

The tract at residues Met-1–Glu-411 is adenylyl removase. The interval Asn-417–Val-896 is adenylyl transferase.

The protein belongs to the GlnE family. Requires Mg(2+) as cofactor.

The enzyme catalyses [glutamine synthetase]-O(4)-(5'-adenylyl)-L-tyrosine + phosphate = [glutamine synthetase]-L-tyrosine + ADP. It catalyses the reaction [glutamine synthetase]-L-tyrosine + ATP = [glutamine synthetase]-O(4)-(5'-adenylyl)-L-tyrosine + diphosphate. Involved in the regulation of glutamine synthetase GlnA, a key enzyme in the process to assimilate ammonia. When cellular nitrogen levels are high, the C-terminal adenylyl transferase (AT) inactivates GlnA by covalent transfer of an adenylyl group from ATP to specific tyrosine residue of GlnA, thus reducing its activity. Conversely, when nitrogen levels are low, the N-terminal adenylyl removase (AR) activates GlnA by removing the adenylyl group by phosphorolysis, increasing its activity. The regulatory region of GlnE binds the signal transduction protein PII (GlnB) which indicates the nitrogen status of the cell. This Neisseria meningitidis serogroup B (strain ATCC BAA-335 / MC58) protein is Bifunctional glutamine synthetase adenylyltransferase/adenylyl-removing enzyme.